We begin with the raw amino-acid sequence, 639 residues long: Chaperone protein DnaK (639 aa).

Threonine 198 bears the Phosphothreonine; by autocatalysis mark. The segment covering 603-618 (AKAQTQGGAQEGAAKQ) has biased composition (low complexity). The tract at residues 603 to 639 (AKAQTQGGAQEGAAKQSNATADDVVDAEFEEVKDDKK) is disordered. The span at 625–639 (DVVDAEFEEVKDDKK) shows a compositional bias: acidic residues.

This sequence belongs to the heat shock protein 70 family.

Acts as a chaperone. The polypeptide is Chaperone protein DnaK (Shewanella sp. (strain MR-7)).